Here is a 397-residue protein sequence, read N- to C-terminus: Probable peptidoglycan glycosyltransferase FtsW (397 aa).

Over 1 to 18 the chain is Cytoplasmic; it reads MSALTLTASKNTQTMTLD. A helical membrane pass occupies residues 19–39; sequence LPLLGSALALAAIGLIMVTSA. The Periplasmic portion of the chain corresponds to 40–58; that stretch reads SVDFADDANGQALYYMWRH. A helical transmembrane segment spans residues 59–79; it reads LTYLLAGVAVGFVILRLPLEW. Topologically, residues 80 to 83 are cytoplasmic; it reads WHKQ. The helical transmembrane segment at 84–104 threads the bilayer; that stretch reads SWLLLVVALGFLVAVLIPGIG. The Periplasmic portion of the chain corresponds to 105–112; sequence RTVNGSTR. A helical membrane pass occupies residues 113–133; it reads WISLGVINIQASEIAKVCLAI. Topologically, residues 134–148 are cytoplasmic; the sequence is YTASYLVRRLDEVRG. A helical membrane pass occupies residues 149–169; sequence SWWGFAKPLLVLMLVALLLLM. The Periplasmic segment spans residues 170–172; it reads EPD. The chain crosses the membrane as a helical span at residues 173–193; that stretch reads FGALVVTMCAVVGMIFLSGVA. Residues 194–196 are Cytoplasmic-facing; sequence LSR. The chain crosses the membrane as a helical span at residues 197 to 217; the sequence is FAALLMFCVGSVALLAVSQPY. At 218–272 the chain is on the periplasmic side; the sequence is RLKRLTAYTDPWADQFDSGYQLTQALIAFGRGEWSGVGLGNSVQKLFYLPEAHTD. Residues 273 to 293 form a helical membrane-spanning segment; the sequence is FVFAIIAEELGLLGSLLIIVL. Residues 294–316 lie on the Cytoplasmic side of the membrane; sequence FGVLLWRGMYVSRVAERAGQLFN. The helical transmembrane segment at 317–337 threads the bilayer; sequence AYAGYGVTLLLGGQALINLGV. The Periplasmic segment spans residues 338 to 348; the sequence is NTGLLPTKGLT. Residues 349 to 369 form a helical membrane-spanning segment; sequence LPLISYGGSSLIISCLCVAIL. At 370–397 the chain is on the cytoplasmic side; the sequence is LRIGSEAVSGEQTEDESPKVKNRGGAQR.

The protein belongs to the SEDS family. FtsW subfamily.

It is found in the cell inner membrane. It catalyses the reaction [GlcNAc-(1-&gt;4)-Mur2Ac(oyl-L-Ala-gamma-D-Glu-L-Lys-D-Ala-D-Ala)](n)-di-trans,octa-cis-undecaprenyl diphosphate + beta-D-GlcNAc-(1-&gt;4)-Mur2Ac(oyl-L-Ala-gamma-D-Glu-L-Lys-D-Ala-D-Ala)-di-trans,octa-cis-undecaprenyl diphosphate = [GlcNAc-(1-&gt;4)-Mur2Ac(oyl-L-Ala-gamma-D-Glu-L-Lys-D-Ala-D-Ala)](n+1)-di-trans,octa-cis-undecaprenyl diphosphate + di-trans,octa-cis-undecaprenyl diphosphate + H(+). The protein operates within cell wall biogenesis; peptidoglycan biosynthesis. Functionally, peptidoglycan polymerase that is essential for cell division. In Hahella chejuensis (strain KCTC 2396), this protein is Probable peptidoglycan glycosyltransferase FtsW.